A 503-amino-acid polypeptide reads, in one-letter code: Glutamate--tRNA ligase (503 aa).

Residues 15–25 carry the 'HIGH' region motif; the sequence is PSPTGHLHVGG. The 'KMSKS' region motif lies at 262–266; that stretch reads KLSKR. Lys-265 lines the ATP pocket.

The protein belongs to the class-I aminoacyl-tRNA synthetase family. Glutamate--tRNA ligase type 1 subfamily. As to quaternary structure, monomer.

The protein localises to the cytoplasm. It catalyses the reaction tRNA(Glu) + L-glutamate + ATP = L-glutamyl-tRNA(Glu) + AMP + diphosphate. Catalyzes the attachment of glutamate to tRNA(Glu) in a two-step reaction: glutamate is first activated by ATP to form Glu-AMP and then transferred to the acceptor end of tRNA(Glu). The chain is Glutamate--tRNA ligase from Chlorobium phaeobacteroides (strain BS1).